The primary structure comprises 281 residues: Large ribosomal subunit protein uL2 (281 aa).

Residues 222–281 form a disordered region; that stretch reads TVRGSVMNPNDHPHGGGEGRTPIGRKSPVTPWGKKALGVKTRNTKKPSEKLIVRKRNAKK.

The protein belongs to the universal ribosomal protein uL2 family. Part of the 50S ribosomal subunit. Forms a bridge to the 30S subunit in the 70S ribosome.

Functionally, one of the primary rRNA binding proteins. Required for association of the 30S and 50S subunits to form the 70S ribosome, for tRNA binding and peptide bond formation. It has been suggested to have peptidyltransferase activity; this is somewhat controversial. Makes several contacts with the 16S rRNA in the 70S ribosome. The polypeptide is Large ribosomal subunit protein uL2 (Mesoplasma florum (strain ATCC 33453 / NBRC 100688 / NCTC 11704 / L1) (Acholeplasma florum)).